The following is a 169-amino-acid chain: Large ribosomal subunit protein uL10 (169 aa).

This sequence belongs to the universal ribosomal protein uL10 family. In terms of assembly, part of the ribosomal stalk of the 50S ribosomal subunit. The N-terminus interacts with L11 and the large rRNA to form the base of the stalk. The C-terminus forms an elongated spine to which L12 dimers bind in a sequential fashion forming a multimeric L10(L12)X complex.

Forms part of the ribosomal stalk, playing a central role in the interaction of the ribosome with GTP-bound translation factors. The sequence is that of Large ribosomal subunit protein uL10 from Onion yellows phytoplasma (strain OY-M).